The chain runs to 401 residues: tRNA(Met) cytidine acetate ligase (401 aa).

ATP-binding positions include 7–20 (IVEY…HLYH), glycine 102, asparagine 164, and arginine 189.

This sequence belongs to the TmcAL family.

The protein localises to the cytoplasm. It catalyses the reaction cytidine(34) in elongator tRNA(Met) + acetate + ATP = N(4)-acetylcytidine(34) in elongator tRNA(Met) + AMP + diphosphate. In terms of biological role, catalyzes the formation of N(4)-acetylcytidine (ac(4)C) at the wobble position of elongator tRNA(Met), using acetate and ATP as substrates. First activates an acetate ion to form acetyladenylate (Ac-AMP) and then transfers the acetyl group to tRNA to form ac(4)C34. In Thermoanaerobacter pseudethanolicus (strain ATCC 33223 / 39E) (Clostridium thermohydrosulfuricum), this protein is tRNA(Met) cytidine acetate ligase.